Reading from the N-terminus, the 77-residue chain is NAD(P)H-quinone oxidoreductase subunit L (77 aa).

2 helical membrane passes run 12–32 (LIAY…LLFY) and 47–67 (LGIY…SPFL).

Belongs to the complex I NdhL subunit family. As to quaternary structure, NDH-1 can be composed of about 15 different subunits; different subcomplexes with different compositions have been identified which probably have different functions.

The protein localises to the cellular thylakoid membrane. It catalyses the reaction a plastoquinone + NADH + (n+1) H(+)(in) = a plastoquinol + NAD(+) + n H(+)(out). The catalysed reaction is a plastoquinone + NADPH + (n+1) H(+)(in) = a plastoquinol + NADP(+) + n H(+)(out). In terms of biological role, NDH-1 shuttles electrons from an unknown electron donor, via FMN and iron-sulfur (Fe-S) centers, to quinones in the respiratory and/or the photosynthetic chain. The immediate electron acceptor for the enzyme in this species is believed to be plastoquinone. Couples the redox reaction to proton translocation, and thus conserves the redox energy in a proton gradient. Cyanobacterial NDH-1 also plays a role in inorganic carbon-concentration. The protein is NAD(P)H-quinone oxidoreductase subunit L of Prochlorococcus marinus (strain MIT 9301).